The sequence spans 429 residues: Serine hydroxymethyltransferase (429 aa).

(6S)-5,6,7,8-tetrahydrofolate is bound at residue 120 to 122 (GHI). Residue Lys226 is modified to N6-(pyridoxal phosphate)lysine.

Belongs to the SHMT family. As to quaternary structure, homodimer. Requires pyridoxal 5'-phosphate as cofactor.

Its subcellular location is the cytoplasm. Its pathway is amino-acid biosynthesis; glycine biosynthesis; glycine from L-serine: step 1/1. Functionally, catalyzes the reversible interconversion of serine and glycine with a modified folate serving as the one-carbon carrier. Also exhibits a pteridine-independent aldolase activity toward beta-hydroxyamino acids, producing glycine and aldehydes, via a retro-aldol mechanism. In Pyrobaculum arsenaticum (strain DSM 13514 / JCM 11321 / PZ6), this protein is Serine hydroxymethyltransferase.